The primary structure comprises 450 residues: Probable ECA polymerase (450 aa).

11 helical membrane passes run 6–26 (FSGLFVVWLLCTLFIATLTWF), 37–57 (VFFSLLFLLTFFFGFPLTSVL), 63–83 (VGVAPPEILLQALLSAGCFYA), 118–138 (VILMGIALVSVGIFFMHNGFL), 155–175 (GVALKRFFYFFIPAMLVVYFL), 181–201 (AWLFFLVSTVAFGLLTYMIVG), 207–227 (IIIAFAIFLFIGIIRGWISLW), 228–248 (MLAAAGVLGIVGMFWLALKRY), 341–361 (LVVMGGALFIPLGAIVVGLII), 378–398 (YKAAILHSFCFGAIFNMIVLA), and 410–430 (VFFIVVFGACLMIAKLLYWLF).

The protein belongs to the WzyE family. As to quaternary structure, probably part of a complex composed of WzxE, WzyE and WzzE.

The protein localises to the cell inner membrane. Its pathway is bacterial outer membrane biogenesis; enterobacterial common antigen biosynthesis. In terms of biological role, probably involved in the polymerization of enterobacterial common antigen (ECA) trisaccharide repeat units. The chain is Probable ECA polymerase from Escherichia coli O127:H6 (strain E2348/69 / EPEC).